The primary structure comprises 107 residues: MMTESEFIRASEALFEHIEDQIDENGWDFDCRFAGNVLTIEAGDGTQIIVNRHTPNQELWIAAKSGGYHFAEQNGKWLATRDSRDFYDVLNEALSAASGEAVKIAEL.

It belongs to the frataxin family.

In terms of biological role, involved in iron-sulfur (Fe-S) cluster assembly. May act as a regulator of Fe-S biogenesis. This chain is Iron-sulfur cluster assembly protein CyaY, found in Neisseria meningitidis serogroup A / serotype 4A (strain DSM 15465 / Z2491).